Here is a 312-residue protein sequence, read N- to C-terminus: Methionyl-tRNA formyltransferase (312 aa).

Ser110 to Pro113 contributes to the (6S)-5,6,7,8-tetrahydrofolate binding site.

The protein belongs to the Fmt family.

The enzyme catalyses L-methionyl-tRNA(fMet) + (6R)-10-formyltetrahydrofolate = N-formyl-L-methionyl-tRNA(fMet) + (6S)-5,6,7,8-tetrahydrofolate + H(+). Functionally, attaches a formyl group to the free amino group of methionyl-tRNA(fMet). The formyl group appears to play a dual role in the initiator identity of N-formylmethionyl-tRNA by promoting its recognition by IF2 and preventing the misappropriation of this tRNA by the elongation apparatus. The polypeptide is Methionyl-tRNA formyltransferase (Mycobacterium ulcerans (strain Agy99)).